A 151-amino-acid polypeptide reads, in one-letter code: Ribosome maturation factor RimP (151 aa).

Belongs to the RimP family.

It localises to the cytoplasm. In terms of biological role, required for maturation of 30S ribosomal subunits. This is Ribosome maturation factor RimP from Shewanella woodyi (strain ATCC 51908 / MS32).